The chain runs to 563 residues: 2-isopropylmalate synthase (563 aa).

The 275-residue stretch at 31–305 folds into the Pyruvate carboxyltransferase domain; sequence PIWMSTDLRD…DPGLDFAQIN (275 aa). Mg(2+) contacts are provided by aspartate 40, histidine 244, histidine 246, and asparagine 280. Positions 437 to 563 are regulatory domain; the sequence is RAEPIEYLSH…EWARLCGGAE (127 aa).

It belongs to the alpha-IPM synthase/homocitrate synthase family. LeuA type 2 subfamily. As to quaternary structure, homodimer. Requires Mg(2+) as cofactor.

The protein localises to the cytoplasm. The enzyme catalyses 3-methyl-2-oxobutanoate + acetyl-CoA + H2O = (2S)-2-isopropylmalate + CoA + H(+). It functions in the pathway amino-acid biosynthesis; L-leucine biosynthesis; L-leucine from 3-methyl-2-oxobutanoate: step 1/4. Functionally, catalyzes the condensation of the acetyl group of acetyl-CoA with 3-methyl-2-oxobutanoate (2-ketoisovalerate) to form 3-carboxy-3-hydroxy-4-methylpentanoate (2-isopropylmalate). The sequence is that of 2-isopropylmalate synthase from Parvibaculum lavamentivorans (strain DS-1 / DSM 13023 / NCIMB 13966).